We begin with the raw amino-acid sequence, 430 residues long: Enolase (430 aa).

Gln163 contributes to the (2R)-2-phosphoglycerate binding site. Glu205 serves as the catalytic Proton donor. Mg(2+) contacts are provided by Asp242, Glu285, and Asp312. The (2R)-2-phosphoglycerate site is built by Lys337, Arg366, Ser367, and Lys388. Catalysis depends on Lys337, which acts as the Proton acceptor.

It belongs to the enolase family. Mg(2+) serves as cofactor.

Its subcellular location is the cytoplasm. The protein localises to the secreted. It localises to the cell surface. The enzyme catalyses (2R)-2-phosphoglycerate = phosphoenolpyruvate + H2O. It participates in carbohydrate degradation; glycolysis; pyruvate from D-glyceraldehyde 3-phosphate: step 4/5. Catalyzes the reversible conversion of 2-phosphoglycerate (2-PG) into phosphoenolpyruvate (PEP). It is essential for the degradation of carbohydrates via glycolysis. The chain is Enolase from Maridesulfovibrio salexigens (strain ATCC 14822 / DSM 2638 / NCIMB 8403 / VKM B-1763) (Desulfovibrio salexigens).